Here is a 511-residue protein sequence, read N- to C-terminus: Cytochrome P450 monooxygenase prhD (511 aa).

Asn-7 carries N-linked (GlcNAc...) asparagine glycosylation. Residues 10-30 (GNGMGLLIPLGLSWLIWTILL) traverse the membrane as a helical segment. Cys-444 is a binding site for heme. Asn-502 is a glycosylation site (N-linked (GlcNAc...) asparagine).

The protein belongs to the cytochrome P450 family. It depends on heme as a cofactor.

The protein resides in the membrane. The protein operates within secondary metabolite biosynthesis; terpenoid biosynthesis. Its function is as follows. Cytochrome P450 monooxygenase; part of the gene cluster that mediates the biosynthesis of paraherquonin, a meroterpenoid with a unique, highly congested hexacyclic molecular architecture. The first step of the pathway is the synthesis of 3,5-dimethylorsellinic acid (DMOA) by the polyketide synthase prhL. Synthesis of DMOA is followed by farnesylation by the prenyltransferase prhE, methylesterification by the methyl-transferase prhM, epoxidation of the prenyl chain by the flavin-dependent monooxygenase prhF, and cyclization of the farnesyl moiety by the terpene cyclase prhH, to yield the tetracyclic intermediate, protoaustinoid A. The short chain dehydrogenase prhI then oxidizes the C-3 alcohol group of the terpene cyclase product to transform protoaustinoid A into protoaustinoid B. The FAD-binding monooxygenase prhJ catalyzes the oxidation of protoaustinoid B into preaustinoid A which is further oxidized into preaustinoid A1 by FAD-binding monooxygenase phrK. Finally, prhA leads to berkeleydione via the berkeleyone B intermediate. PrhA is a multifunctional dioxygenase that first desaturates at C5-C6 to form berkeleyone B, followed by rearrangement of the A/B-ring to form the cycloheptadiene moiety in berkeleydione. Berkeleydione serves as the key intermediate for the biosynthesis of paraherquonin as well as many other meroterpenoids. The cytochrome P450 monooxygenases prhB, prhD, and prhN, as well as the isomerase prhC, are probably involved in the late stage of paraherquonin biosynthesis, after the production of berkeleydione. Especially prhC might be a multifunctional enzyme that catalyzes the D-ring expansion via intramolecular methoxy rearrangement, as well as the hydrolysis of the expanded D-ring. The chain is Cytochrome P450 monooxygenase prhD from Penicillium brasilianum.